The sequence spans 308 residues: Taste receptor type 2 member 46 (308 aa).

A topological domain (extracellular) is located at residue Met1. Residues 2–22 traverse the membrane as a helical segment; that stretch reads ITFLSITFSILVGVIFVIGNF. The Cytoplasmic segment spans residues 23-46; that stretch reads ANGFIALVNSIEWVKRQKISFADQ. A helical transmembrane segment spans residues 47–67; sequence ILTGLAVSRVGLLWVLLLHLY. Over 68 to 86 the chain is Extracellular; it reads ATEFNLAFYSVEVRITAYN. A helical membrane pass occupies residues 87–107; the sequence is VWIVTNHFSNWLSTSLSMFYL. The Cytoplasmic segment spans residues 108–126; it reads LKIATFSNLIFLHLKRKVK. A helical transmembrane segment spans residues 127-147; sequence SVILVTLLGPLLFLVCHLFVM. The Extracellular segment spans residues 148–178; that stretch reads NMNHIVWRKEYEGNITWRIKLRSAMYLSNVT. Asn161 and Asn176 each carry an N-linked (GlcNAc...) asparagine glycan. Residues 179–199 traverse the membrane as a helical segment; sequence VTMLANLIPLTLTLMSFLLLI. Over 200 to 229 the chain is Cytoplasmic; it reads CSLCKHLKKMQVHGKGSQDPSTKVHIKALQ. Residues 230–250 form a helical membrane-spanning segment; that stretch reads TVTSFLLLCAIYFLSMILSVW. Residues 251 to 258 lie on the Extracellular side of the membrane; sequence NFELEKKP. A helical membrane pass occupies residues 259 to 279; that stretch reads VFMFCQAVIFSYPSTHPLILI. Over 280–308 the chain is Cytoplasmic; the sequence is WGNKKLKQIFLSVLWNVRYWVKGQKPSSP.

This sequence belongs to the G-protein coupled receptor T2R family.

It is found in the membrane. The protein resides in the cell projection. It localises to the cilium membrane. In terms of biological role, receptor that may play a role in the perception of bitterness and is gustducin-linked. May play a role in sensing the chemical composition of the gastrointestinal content. The activity of this receptor may stimulate alpha gustducin, mediate PLC-beta-2 activation and lead to the gating of TRPM5. In airway epithelial cells, binding of bitter compounds increases the intracellular calcium ion concentration and stimulates ciliary beat frequency. The chain is Taste receptor type 2 member 46 (TAS2R46) from Macaca mulatta (Rhesus macaque).